The chain runs to 280 residues: Hydroxyethylthiazole kinase (280 aa).

Met-50 lines the substrate pocket. Lys-125 and Thr-178 together coordinate ATP. Gly-205 is a substrate binding site.

Belongs to the Thz kinase family. It depends on Mg(2+) as a cofactor.

It catalyses the reaction 5-(2-hydroxyethyl)-4-methylthiazole + ATP = 4-methyl-5-(2-phosphooxyethyl)-thiazole + ADP + H(+). The protein operates within cofactor biosynthesis; thiamine diphosphate biosynthesis; 4-methyl-5-(2-phosphoethyl)-thiazole from 5-(2-hydroxyethyl)-4-methylthiazole: step 1/1. In terms of biological role, catalyzes the phosphorylation of the hydroxyl group of 4-methyl-5-beta-hydroxyethylthiazole (THZ). The chain is Hydroxyethylthiazole kinase from Lacticaseibacillus casei (strain BL23) (Lactobacillus casei).